Here is a 525-residue protein sequence, read N- to C-terminus: Glutamate--cysteine ligase (525 aa).

The protein belongs to the glutamate--cysteine ligase type 1 family. Type 1 subfamily.

The catalysed reaction is L-cysteine + L-glutamate + ATP = gamma-L-glutamyl-L-cysteine + ADP + phosphate + H(+). The protein operates within sulfur metabolism; glutathione biosynthesis; glutathione from L-cysteine and L-glutamate: step 1/2. The protein is Glutamate--cysteine ligase of Alcanivorax borkumensis (strain ATCC 700651 / DSM 11573 / NCIMB 13689 / SK2).